Consider the following 344-residue polypeptide: Lipopolysaccharide heptosyltransferase 3 (344 aa).

It belongs to the glycosyltransferase 9 family.

The catalysed reaction is an L-alpha-D-Hep-(1-&gt;3)-4-O-phospho-L-alpha-D-Hep-(1-&gt;5)-[alpha-Kdo-(2-&gt;4)]-alpha-Kdo-(2-&gt;6)-lipid A + ADP-L-glycero-beta-D-manno-heptose = an L-alpha-D-Hep-(1-&gt;7)-L-alpha-D-Hep-(1-&gt;3)-4-O-phospho-L-alpha-D-Hep-(1-&gt;5)-[alpha-Kdo-(2-&gt;4)]-alpha-Kdo-(2-&gt;6)-lipid A + ADP + H(+). It carries out the reaction L-alpha-D-Hep-(1-&gt;3)-4-O-phospho-L-alpha-D-Hep-(1-&gt;5)-[alpha-Kdo-(2-&gt;4)]-alpha-Kdo-(2-&gt;6)-lipid A (E. coli) + ADP-L-glycero-beta-D-manno-heptose = L-alpha-D-Hep-(1-&gt;7)-L-alpha-D-Hep-(1-&gt;3)-4-O-phospho-L-alpha-D-Hep-(1-&gt;5)-[alpha-Kdo-(2-&gt;4)]-alpha-Kdo-(2-&gt;6)-lipid A (E. coli) + ADP + H(+). The protein operates within bacterial outer membrane biogenesis; LPS core biosynthesis. In terms of biological role, glycosyltransferase involved in the biosynthesis of the core oligosaccharide region of lipopolysaccharide (LPS). Catalyzes the addition of the third heptose unit (HepIII) to the second heptose unit (HepII) of the phospho-Hep2-Kdo2-lipid A module. The protein is Lipopolysaccharide heptosyltransferase 3 of Escherichia coli (strain K12).